Here is a 450-residue protein sequence, read N- to C-terminus: Tubulin alpha-1 chain (450 aa).

Residues glutamine 11, glutamate 71, glycine 144, threonine 145, threonine 179, asparagine 206, and asparagine 228 each contribute to the GTP site. Position 71 (glutamate 71) interacts with Mg(2+). Glutamate 254 is an active-site residue.

It belongs to the tubulin family. In terms of assembly, dimer of alpha and beta chains. A typical microtubule is a hollow water-filled tube with an outer diameter of 25 nm and an inner diameter of 15 nM. Alpha-beta heterodimers associate head-to-tail to form protofilaments running lengthwise along the microtubule wall with the beta-tubulin subunit facing the microtubule plus end conferring a structural polarity. Microtubules usually have 13 protofilaments but different protofilament numbers can be found in some organisms and specialized cells. It depends on Mg(2+) as a cofactor. Undergoes a tyrosination/detyrosination cycle, the cyclic removal and re-addition of a C-terminal tyrosine residue by the enzymes tubulin tyrosine carboxypeptidase (TTCP) and tubulin tyrosine ligase (TTL), respectively.

The protein resides in the cytoplasm. The protein localises to the cytoskeleton. It catalyses the reaction GTP + H2O = GDP + phosphate + H(+). In terms of biological role, tubulin is the major constituent of microtubules, a cylinder consisting of laterally associated linear protofilaments composed of alpha- and beta-tubulin heterodimers. Microtubules grow by the addition of GTP-tubulin dimers to the microtubule end, where a stabilizing cap forms. Below the cap, tubulin dimers are in GDP-bound state, owing to GTPase activity of alpha-tubulin. The chain is Tubulin alpha-1 chain (TUBA1) from Hordeum vulgare (Barley).